The following is a 241-amino-acid chain: MAPK phosphothreonine lyase (241 aa).

H106 serves as the catalytic Proton donor. K136 serves as the catalytic Proton acceptor.

The protein belongs to the phosphothreonine lyase family.

The protein localises to the secreted. Secreted effector that irreversibly inactivates host MAP kinases by catalyzing the dephosphorylation of the phosphothreonine residue in the pT-X-pY motif present in MAPKs, via a beta-elimination reaction leading to a dehydrobutyrine residue. This is MAPK phosphothreonine lyase (spvC) from Salmonella enteritidis.